The chain runs to 446 residues: Chromosomal replication initiator protein DnaA (446 aa).

Residues 1–92 (MENISDLWNS…SQAEEEIDLP (92 aa)) form a domain I, interacts with DnaA modulators region. Residues 87–107 (EEIDLPPSKPNSAQDDSNHLP) form a disordered region. A domain II region spans residues 93–109 (PSKPNSAQDDSNHLPQS). Over residues 96–107 (PNSAQDDSNHLP) the composition is skewed to polar residues. Residues 110-326 (MLNPKYTFDT…GALIRVVAYS (217 aa)) form a domain III, AAA+ region region. Residues Gly154, Gly156, Lys157, and Thr158 each coordinate ATP. A domain IV, binds dsDNA region spans residues 327 to 446 (SLINKDINAD…QVEEINDILK (120 aa)).

The protein belongs to the DnaA family. In terms of assembly, oligomerizes as a right-handed, spiral filament on DNA at oriC.

It localises to the cytoplasm. Its function is as follows. Plays an essential role in the initiation and regulation of chromosomal replication. ATP-DnaA binds to the origin of replication (oriC) to initiate formation of the DNA replication initiation complex once per cell cycle. Binds the DnaA box (a 9 base pair repeat at the origin) and separates the double-stranded (ds)DNA. Forms a right-handed helical filament on oriC DNA; dsDNA binds to the exterior of the filament while single-stranded (ss)DNA is stabiized in the filament's interior. The ATP-DnaA-oriC complex binds and stabilizes one strand of the AT-rich DNA unwinding element (DUE), permitting loading of DNA polymerase. After initiation quickly degrades to an ADP-DnaA complex that is not apt for DNA replication. Binds acidic phospholipids. The protein is Chromosomal replication initiator protein DnaA of Bacillus cereus (strain ATCC 10987 / NRS 248).